The chain runs to 319 residues: Bidirectional sugar transporter SWEET15 (319 aa).

The Extracellular segment spans residues 1–10 (MAFMSMERST). A helical transmembrane segment spans residues 11 to 31 (WAFTFGILGNLISLMVFLSPL). Residues 13-99 (FTFGILGNLI…AMYLAYAPKS (87 aa)) form the MtN3/slv 1 domain. Residues 32 to 50 (PTFYRVYRKKSTEGFQSTP) are Cytoplasmic-facing. Residues 51–71 (YVVTLFSCMLWMYYAFVKSGA) form a helical membrane-spanning segment. Glu72 is a topological domain (extracellular). A helical membrane pass occupies residues 73 to 93 (LLVTINGVGCVIETVYLAMYL). The Cytoplasmic portion of the chain corresponds to 94–106 (AYAPKSARMLTAK). A helical transmembrane segment spans residues 107-127 (MLLGLNIGLFGVIALVTLLLS). Residues 128–134 (RGELRVH) lie on the Extracellular side of the membrane. A helical transmembrane segment spans residues 135-155 (VLGWICVAVSLSVFAAPLSII). The 85-residue stretch at 135–219 (VLGWICVAVS…ALYMAYRSKK (85 aa)) folds into the MtN3/slv 2 domain. Over 156–167 (RLVIRTKSVEFM) the chain is Cytoplasmic. Residues 168–188 (PFSLSFFLVLSAVIWFLYGLL) traverse the membrane as a helical segment. Residues 189–191 (KKD) are Extracellular-facing. A helical transmembrane segment spans residues 192-212 (VFVALPNVLGFVFGVAQMALY). Over 213–319 (MAYRSKKPLV…KPDMAIVVEV (107 aa)) the chain is Cytoplasmic.

This sequence belongs to the SWEET sugar transporter family. In terms of assembly, forms homooligomers and/or heterooligomers.

Its subcellular location is the cell membrane. Its function is as follows. Mediates both low-affinity uptake and efflux of sugar across the plasma membrane. Functionally, confers blight susceptibility. Confers TAL effector-mediated susceptibility to Xanthomonas oryzae pv. oryzae. This Oryza sativa subsp. japonica (Rice) protein is Bidirectional sugar transporter SWEET15 (SWEET15).